Reading from the N-terminus, the 107-residue chain is Iron-binding protein IscA (107 aa).

Fe cation contacts are provided by C35, C99, and C101.

The protein belongs to the HesB/IscA family. As to quaternary structure, homodimer; may form tetramers and higher multimers. Fe cation is required as a cofactor.

Its function is as follows. Is able to transfer iron-sulfur clusters to apo-ferredoxin. Multiple cycles of [2Fe2S] cluster formation and transfer are observed, suggesting that IscA acts catalytically. Recruits intracellular free iron so as to provide iron for the assembly of transient iron-sulfur cluster in IscU in the presence of IscS, L-cysteine and the thioredoxin reductase system TrxA/TrxB. The chain is Iron-binding protein IscA from Proteus mirabilis (strain HI4320).